A 71-amino-acid chain; its full sequence is Conotoxin Bu24 (71 aa).

Residues 1–21 form the signal peptide; sequence MGMRMMVTVFLLVVLATTVVS. A propeptide spanning residues 22 to 44 is cleaved from the precursor; that stretch reads LRSNRASDGRRGIVNKLNDLVPK. At asparagine 70 the chain carries Asparagine amide.

It belongs to the conotoxin A superfamily. Contains 3 disulfide bonds. They are not indicated here, since framework IV presents two different connectivities (I-V, II-III, IV-VI and I-III, II-V, IV-VI). Expressed by the venom duct.

It is found in the secreted. This Conus bullatus (Bubble cone) protein is Conotoxin Bu24.